The following is a 214-amino-acid chain: Cell division protein B1 (214 aa).

Part of a cell division machinery. This chain is Cell division protein B1, found in Sulfolobus acidocaldarius (strain ATCC 33909 / DSM 639 / JCM 8929 / NBRC 15157 / NCIMB 11770).